We begin with the raw amino-acid sequence, 188 residues long: Putative nucleotidase OB0422 (188 aa).

Belongs to the 5'(3')-deoxyribonucleotidase family.

The chain is Putative nucleotidase OB0422 from Oceanobacillus iheyensis (strain DSM 14371 / CIP 107618 / JCM 11309 / KCTC 3954 / HTE831).